We begin with the raw amino-acid sequence, 94 residues long: Large ribosomal subunit protein bL28 (94 aa).

Belongs to the bacterial ribosomal protein bL28 family.

This chain is Large ribosomal subunit protein bL28, found in Maricaulis maris (strain MCS10) (Caulobacter maris).